Consider the following 223-residue polypeptide: Ribose-5-phosphate isomerase A (223 aa).

Residues 29-32 (TGST), 82-85 (DGAD), and 95-98 (KGGG) contribute to the substrate site. Glu-104 (proton acceptor) is an active-site residue. Lys-122 contacts substrate.

This sequence belongs to the ribose 5-phosphate isomerase family. Homodimer.

The catalysed reaction is aldehydo-D-ribose 5-phosphate = D-ribulose 5-phosphate. It participates in carbohydrate degradation; pentose phosphate pathway; D-ribose 5-phosphate from D-ribulose 5-phosphate (non-oxidative stage): step 1/1. Catalyzes the reversible conversion of ribose-5-phosphate to ribulose 5-phosphate. In Neisseria gonorrhoeae (strain ATCC 700825 / FA 1090), this protein is Ribose-5-phosphate isomerase A.